A 273-amino-acid polypeptide reads, in one-letter code: Undecaprenyl-diphosphatase (273 aa).

Helical transmembrane passes span 4–24, 43–63, 82–102, 108–128, 183–203, 217–237, and 253–273; these read LILIKAFLLGIVEGLTEFLPI, KAQVFTVAIQLGAILSVCWEY, FVLNLCVAFLPAAILGLLFIK, LFHPLPVAIALVTGGVLILWA, AAEFSFFLAIPIMFAATFYDV, MFVVGSIAAFISALIAIRGFI, and IGFGLIVLLTAHFGLINWSAG.

This sequence belongs to the UppP family.

It is found in the cell inner membrane. It catalyses the reaction di-trans,octa-cis-undecaprenyl diphosphate + H2O = di-trans,octa-cis-undecaprenyl phosphate + phosphate + H(+). Its function is as follows. Catalyzes the dephosphorylation of undecaprenyl diphosphate (UPP). Confers resistance to bacitracin. The sequence is that of Undecaprenyl-diphosphatase from Nitrosomonas eutropha (strain DSM 101675 / C91 / Nm57).